A 504-amino-acid chain; its full sequence is 2,3-bisphosphoglycerate-independent phosphoglycerate mutase (504 aa).

Residues aspartate 13 and serine 63 each contribute to the Mn(2+) site. Serine 63 serves as the catalytic Phosphoserine intermediate. Substrate contacts are provided by residues histidine 124, 153–154, arginine 183, arginine 189, 254–257, and lysine 330; these read RD and RADR. Mn(2+)-binding residues include aspartate 397, histidine 401, aspartate 438, histidine 439, and histidine 457.

It belongs to the BPG-independent phosphoglycerate mutase family. In terms of assembly, monomer. Requires Mn(2+) as cofactor.

It carries out the reaction (2R)-2-phosphoglycerate = (2R)-3-phosphoglycerate. The protein operates within carbohydrate degradation; glycolysis; pyruvate from D-glyceraldehyde 3-phosphate: step 3/5. Functionally, catalyzes the interconversion of 2-phosphoglycerate and 3-phosphoglycerate. The chain is 2,3-bisphosphoglycerate-independent phosphoglycerate mutase from Rhodopseudomonas palustris (strain ATCC BAA-98 / CGA009).